We begin with the raw amino-acid sequence, 560 residues long: Solute carrier family 49 member A3 (560 aa).

Helical transmembrane passes span 30-50 (WVFL…WLSF), 70-90 (WLSL…IWIL), 100-120 (ILGA…CMVV), 125-145 (PFAF…LVIF), 166-186 (LATM…PVLV), 192-212 (IPLM…LSTI), 250-270 (VILA…SALL), 282-302 (GFSG…ALAL), 318-338 (IGLC…QLQG), 341-361 (LALA…GPVA), 379-399 (GMIF…MTAL), and 422-442 (VSLL…AVFF). The segment at 451 to 540 (AESGEPPSTR…PGRLAGRVQA (90 aa)) is disordered. The segment covering 466–481 (ADSGPGVDRGGAGRAG) has biased composition (gly residues).

This sequence belongs to the major facilitator superfamily.

It localises to the membrane. The sequence is that of Solute carrier family 49 member A3 from Homo sapiens (Human).